The chain runs to 396 residues: Methionine import ATP-binding protein MetN 2 (396 aa).

The region spanning 41-280 is the ABC transporter domain; that stretch reads VSFELVGKVF…PRHGATRALL (240 aa). 77–84 provides a ligand contact to ATP; sequence GRSGAGKS.

Belongs to the ABC transporter superfamily. Methionine importer (TC 3.A.1.24) family. As to quaternary structure, the complex is composed of two ATP-binding proteins (MetN), two transmembrane proteins (MetI) and a solute-binding protein (MetQ).

Its subcellular location is the cell inner membrane. The catalysed reaction is L-methionine(out) + ATP + H2O = L-methionine(in) + ADP + phosphate + H(+). It catalyses the reaction D-methionine(out) + ATP + H2O = D-methionine(in) + ADP + phosphate + H(+). Part of the ABC transporter complex MetNIQ involved in methionine import. Responsible for energy coupling to the transport system. The sequence is that of Methionine import ATP-binding protein MetN 2 from Burkholderia pseudomallei (strain K96243).